We begin with the raw amino-acid sequence, 464 residues long: UDP-glycosyltransferase 83A1 (464 aa).

UDP-alpha-D-glucose contacts are provided by residues Ser295, 341–343, 358–366, and 380–383; these read APQ, HCGWNSTLE, and FADQ.

Belongs to the UDP-glycosyltransferase family.

This Arabidopsis thaliana (Mouse-ear cress) protein is UDP-glycosyltransferase 83A1 (UGT83A1).